Here is a 608-residue protein sequence, read N- to C-terminus: Aspartate--tRNA(Asp/Asn) ligase (608 aa).

E187 lines the L-aspartate pocket. The segment at 211–214 (QQFK) is aspartate. L-aspartate-binding residues include R233 and H461. 233 to 235 (RDE) is a binding site for ATP. E495 contributes to the ATP binding site. R502 provides a ligand contact to L-aspartate. Residue 547 to 550 (GLDR) coordinates ATP.

This sequence belongs to the class-II aminoacyl-tRNA synthetase family. Type 1 subfamily. In terms of assembly, homodimer.

It is found in the cytoplasm. It carries out the reaction tRNA(Asx) + L-aspartate + ATP = L-aspartyl-tRNA(Asx) + AMP + diphosphate. In terms of biological role, aspartyl-tRNA synthetase with relaxed tRNA specificity since it is able to aspartylate not only its cognate tRNA(Asp) but also tRNA(Asn). Reaction proceeds in two steps: L-aspartate is first activated by ATP to form Asp-AMP and then transferred to the acceptor end of tRNA(Asp/Asn). This chain is Aspartate--tRNA(Asp/Asn) ligase, found in Prosthecochloris aestuarii (strain DSM 271 / SK 413).